A 262-amino-acid chain; its full sequence is Hydroxyethylthiazole kinase (262 aa).

Met-39 serves as a coordination point for substrate. ATP contacts are provided by Lys-115 and Thr-160. Gly-187 contacts substrate.

It belongs to the Thz kinase family. Mg(2+) serves as cofactor.

The enzyme catalyses 5-(2-hydroxyethyl)-4-methylthiazole + ATP = 4-methyl-5-(2-phosphooxyethyl)-thiazole + ADP + H(+). Its pathway is cofactor biosynthesis; thiamine diphosphate biosynthesis; 4-methyl-5-(2-phosphoethyl)-thiazole from 5-(2-hydroxyethyl)-4-methylthiazole: step 1/1. Catalyzes the phosphorylation of the hydroxyl group of 4-methyl-5-beta-hydroxyethylthiazole (THZ). The protein is Hydroxyethylthiazole kinase of Staphylococcus epidermidis (strain ATCC 35984 / DSM 28319 / BCRC 17069 / CCUG 31568 / BM 3577 / RP62A).